The sequence spans 654 residues: MEVAMVSAESSGCNSHMPYGYAAQARARERERLAHSRAAAAAAVAAATAAVEGSGGSGGGSHHHHQSRGACTSHDPQGGRGSRRRRRQRPEKKKAHHRQSSFPHCSDLMPSGSEEKILRELSEEEEEEEDEEEEEEEGRFYYSEDDHGDECSYTDLLPQDDGGGGGYSSVRYSDCCERVVINVSGLRFETQMKTLAQFPETLLGDPEKRTQYFDPLRNEYFFDRNRPSFDAILYYYQSGGRLKRPVNVPFDIFTEEVKFYQLGEEALLKFREDEGFVREEEDRALPENEFKKQIWLLFEYPESSSPARGIAIVSVLVILISIVIFCLETLPEFRDDRDLIMALSAGGHSGLLNDTSAPHLENSGHTIFNDPFFIVETVCIVWFSFEFVVRCFACPSQALFFKNIMNIIDIVSILPYFITLGTDLAQQQGGGNGQQQQAMSFAILRIIRLVRVFRIFKLSRHSKGLQILGHTLRASMRELGLLIFFLFIGVILFSSAVYFAEADEPTTHFQSIPDAFWWAVVTMTTVGYGDMKPITVGGKIVGSLCAIAGVLTIALPVPVIVSNFNYFYHRETENEEQTQLTQNAVSCPYLPSNLLKKFRSSTSSSLGDKSEYLEMEEGVKESLCAKEGKCQGKGDDSETDKNNCSNAKAVETDV.

The Cytoplasmic segment spans residues 1 to 305 (MEVAMVSAES…LLFEYPESSS (305 aa)). A compositionally biased stretch (low complexity) spans 39–52 (AAAAAVAAATAAVE). The segment at 39-146 (AAAAAVAAAT…EGRFYYSEDD (108 aa)) is disordered. Over residues 81 to 99 (GSRRRRRQRPEKKKAHHRQ) the composition is skewed to basic residues. Ser-122 is subject to Phosphoserine. The span at 122–137 (SEEEEEEEDEEEEEEE) shows a compositional bias: acidic residues. The helical transmembrane segment at 306 to 327 (PARGIAIVSVLVILISIVIFCL) threads the bilayer. Over 328–371 (ETLPEFRDDRDLIMALSAGGHSGLLNDTSAPHLENSGHTIFNDP) the chain is Extracellular. Asn-353 is a glycosylation site (N-linked (GlcNAc...) asparagine). A helical transmembrane segment spans residues 372–393 (FFIVETVCIVWFSFEFVVRCFA). At 394 to 404 (CPSQALFFKNI) the chain is on the cytoplasmic side. Residues 405 to 425 (MNIIDIVSILPYFITLGTDLA) form a helical membrane-spanning segment. Residues 426–440 (QQQGGGNGQQQQAMS) are Extracellular-facing. Residues 441-461 (FAILRIIRLVRVFRIFKLSRH) traverse the membrane as a helical; Voltage-sensor segment. At 462–476 (SKGLQILGHTLRASM) the chain is on the cytoplasmic side. The segment at 463-476 (KGLQILGHTLRASM) is S4-S5 linker. A helical transmembrane segment spans residues 477–498 (RELGLLIFFLFIGVILFSSAVY). Over 499 to 512 (FAEADEPTTHFQSI) the chain is Extracellular. Residues 513–524 (PDAFWWAVVTMT) constitute an intramembrane region (helical). A Selectivity filter motif is present at residues 525–530 (TVGYGD). An intramembrane segment occupies 525-532 (TVGYGDMK). Residues 533–539 (PITVGGK) lie on the Extracellular side of the membrane. A helical transmembrane segment spans residues 540–568 (IVGSLCAIAGVLTIALPVPVIVSNFNYFY). Residues 569–654 (HRETENEEQT…SNAKAVETDV (86 aa)) lie on the Cytoplasmic side of the membrane. Position 600 is a phosphoserine; by PKA (Ser-600). Residues 630–641 (CQGKGDDSETDK) show a composition bias toward basic and acidic residues. The disordered stretch occupies residues 630-654 (CQGKGDDSETDKNNCSNAKAVETDV). A PDZ-binding motif is present at residues 652–654 (TDV).

The protein belongs to the potassium channel family. A (Shaker) (TC 1.A.1.2) subfamily. Kv1.4/KCNA4 sub-subfamily. Homotetramer and heterotetramer of potassium channel proteins. Interacts with KCNAB1 and KCNAB2. Interacts with DLG1, DLG2 and DLG4 via their PDZ domains. Interacts with SIGMAR1. Detected in a complex with KCNA1. Interacts with KCNA2. Part of a complex containing KCNA1, KCNAB1 and LGI1. Interacts (via cytoplasmic N-terminal domain) with KCNRG. Detectable in brain, atrium, left and right ventricle, and kidney, but not in skeletal muscle, endothelial cells, aorta, and liver.

It is found in the cell membrane. The protein resides in the cell projection. It localises to the axon. It carries out the reaction K(+)(in) = K(+)(out). In terms of biological role, voltage-gated potassium channel that mediates transmembrane potassium transport in excitable membranes. Forms tetrameric potassium-selective channels through which potassium ions pass in accordance with their electrochemical gradient. The channel alternates between opened and closed conformations in response to the voltage difference across the membrane. Can form functional homotetrameric channels and heterotetrameric channels that contain variable proportions of KCNA1, KCNA2, KCNA4, KCNA5, and possibly other family members as well; channel properties depend on the type of alpha subunits that are part of the channel. Channel properties are modulated by cytoplasmic beta subunits that regulate the subcellular location of the alpha subunits and promote rapid inactivation. In vivo, membranes probably contain a mixture of heteromeric potassium channel complexes, making it difficult to assign currents observed in intact tissues to any particular potassium channel family member. Homotetrameric KCNA4 forms a potassium channel that opens in response to membrane depolarization, followed by rapid spontaneous channel closure. Likewise, a heterotetrameric channel formed by KCNA1 and KCNA4 shows rapid inactivation. The protein is Potassium voltage-gated channel subfamily A member 4 (KCNA4) of Mustela putorius furo (European domestic ferret).